The following is a 220-amino-acid chain: dITP/XTP pyrophosphatase (220 aa).

Substrate is bound at residue 13–18; the sequence is SHNAGK. Mg(2+)-binding residues include Asp-45 and Asp-74. The active-site Proton acceptor is Asp-74. Substrate-binding positions include Ser-75, 163–166, Lys-186, and 199–200; these read FGYD and HR.

It belongs to the HAM1 NTPase family. In terms of assembly, homodimer. Mg(2+) serves as cofactor.

It catalyses the reaction XTP + H2O = XMP + diphosphate + H(+). The enzyme catalyses dITP + H2O = dIMP + diphosphate + H(+). It carries out the reaction ITP + H2O = IMP + diphosphate + H(+). Pyrophosphatase that catalyzes the hydrolysis of nucleoside triphosphates to their monophosphate derivatives, with a high preference for the non-canonical purine nucleotides XTP (xanthosine triphosphate), dITP (deoxyinosine triphosphate) and ITP. Seems to function as a house-cleaning enzyme that removes non-canonical purine nucleotides from the nucleotide pool, thus preventing their incorporation into DNA/RNA and avoiding chromosomal lesions. This Mesorhizobium japonicum (strain LMG 29417 / CECT 9101 / MAFF 303099) (Mesorhizobium loti (strain MAFF 303099)) protein is dITP/XTP pyrophosphatase.